Consider the following 548-residue polypeptide: Glucan 1,4-alpha-maltotetraohydrolase (548 aa).

A signal peptide spans 1–21; that stretch reads MSHILRAAVLAAMLLPLPSMA. 5 residues coordinate Ca(2+): Asp-22, Gln-23, His-34, Asp-37, and Glu-38. 99 to 100 contacts substrate; the sequence is YF. Position 137 (Asn-137) interacts with Ca(2+). His-138 lines the substrate pocket. A disulfide bridge connects residues Cys-161 and Cys-171. 2 residues coordinate Ca(2+): Asp-172 and Asp-175. 177-181 contacts substrate; it reads FIGGD. Asp-183 contributes to the Ca(2+) binding site. Position 212 (Arg-212) interacts with substrate. The active-site Nucleophile is the Asp-214. Position 217 to 218 (217 to 218) interacts with substrate; sequence RG. Gly-218 serves as a coordination point for Ca(2+). Cys-237 and Cys-272 are disulfide-bonded. The Proton donor role is filled by Glu-240. Residues His-314 and Gln-326 each contribute to the substrate site. A CBM20 domain is found at 446-548; that stretch reads GEPGALVSVS…SEGATTVGRL (103 aa). Polar residues predominate over residues 529 to 542; sequence QGGANNSLTPSEGA. Positions 529-548 are disordered; sequence QGGANNSLTPSEGATTVGRL.

It belongs to the glycosyl hydrolase 13 family. As to quaternary structure, monomer. Requires Ca(2+) as cofactor.

Its subcellular location is the secreted. It catalyses the reaction Hydrolysis of (1-&gt;4)-alpha-D-glucosidic linkages in amylaceous polysaccharides, to remove successive maltotetraose residues from the non-reducing chain ends.. It functions in the pathway glycan degradation; starch degradation. The chain is Glucan 1,4-alpha-maltotetraohydrolase (amyP) from Stutzerimonas stutzeri (Pseudomonas stutzeri).